The chain runs to 671 residues: Carbohydrate acetyl esterase/feruloyl esterase (671 aa).

The signal sequence occupies residues 1 to 24 (MYQSTLKTILLASALLILPASMSA). The segment at 1–296 (MYQSTLKTIL…YGEAVARHLG (296 aa)) is carbohydrate acetyl esterase. Catalysis depends on for acetyl esterase activity residues Ser55, Asp271, and His274. The feruloyl esterase stretch occupies residues 297–671 (YEPKRPYIEM…NEFIPHLFKK (375 aa)).

This sequence in the N-terminal section; belongs to the carbohydrate esterase 6 family.

It catalyses the reaction feruloyl-polysaccharide + H2O = ferulate + polysaccharide.. Its pathway is glycan degradation; xylan degradation. In terms of biological role, involved in degradation of plant cell wall polysaccharides. Bifunctional esterase that possesses both acetyl esterase and ferulic acid esterase activities. Has deacetylase activity towards acetylated xylo-oligosaccharides smaller than xylo-heptaose, as well as from glucose-pentaacetate. Is also able to release ferulic acid from methylferulate, and from the more natural substrates wheat bran, corn fiber, and XOS(FA,Ac), a corn fiber-derived substrate enriched in O-acetyl and ferulic acid esters. This Xylanibacter ruminicola (strain ATCC 19189 / DSM 19721 / CIP 105475 / JCM 8958 / 23) (Prevotella ruminicola) protein is Carbohydrate acetyl esterase/feruloyl esterase.